Here is a 443-residue protein sequence, read N- to C-terminus: tRNA-2-methylthio-N(6)-dimethylallyladenosine synthase (443 aa).

Residues 3-120 (SKLYIRTFGC…LPDLIDARRR (118 aa)) enclose the MTTase N-terminal domain. [4Fe-4S] cluster contacts are provided by C12, C49, C83, C157, C161, and C164. Positions 143-375 (RTEGSTAFVS…QEKIQLNAQA (233 aa)) constitute a Radical SAM core domain. In terms of domain architecture, TRAM spans 378–441 (QGMVDTVQRI…SHTLRGEISD (64 aa)).

This sequence belongs to the methylthiotransferase family. MiaB subfamily. As to quaternary structure, monomer. Requires [4Fe-4S] cluster as cofactor.

It is found in the cytoplasm. It carries out the reaction N(6)-dimethylallyladenosine(37) in tRNA + (sulfur carrier)-SH + AH2 + 2 S-adenosyl-L-methionine = 2-methylsulfanyl-N(6)-dimethylallyladenosine(37) in tRNA + (sulfur carrier)-H + 5'-deoxyadenosine + L-methionine + A + S-adenosyl-L-homocysteine + 2 H(+). In terms of biological role, catalyzes the methylthiolation of N6-(dimethylallyl)adenosine (i(6)A), leading to the formation of 2-methylthio-N6-(dimethylallyl)adenosine (ms(2)i(6)A) at position 37 in tRNAs that read codons beginning with uridine. This chain is tRNA-2-methylthio-N(6)-dimethylallyladenosine synthase, found in Nitrosomonas europaea (strain ATCC 19718 / CIP 103999 / KCTC 2705 / NBRC 14298).